We begin with the raw amino-acid sequence, 206 residues long: Large ribosomal subunit protein uL4 (206 aa).

The disordered stretch occupies residues A43–S78. Positions K49–H58 are enriched in basic and acidic residues. Residues T59–G70 show a composition bias toward basic residues.

It belongs to the universal ribosomal protein uL4 family. In terms of assembly, part of the 50S ribosomal subunit.

In terms of biological role, one of the primary rRNA binding proteins, this protein initially binds near the 5'-end of the 23S rRNA. It is important during the early stages of 50S assembly. It makes multiple contacts with different domains of the 23S rRNA in the assembled 50S subunit and ribosome. Its function is as follows. Forms part of the polypeptide exit tunnel. The polypeptide is Large ribosomal subunit protein uL4 (Janthinobacterium sp. (strain Marseille) (Minibacterium massiliensis)).